A 412-amino-acid polypeptide reads, in one-letter code: Peptidase T (412 aa).

His-78 is a binding site for Zn(2+). Asp-80 is an active-site residue. Zn(2+) is bound at residue Asp-140. Catalysis depends on Glu-174, which acts as the Proton acceptor. Zn(2+) contacts are provided by Glu-175, Asp-197, and His-379.

Belongs to the peptidase M20B family. It depends on Zn(2+) as a cofactor.

It localises to the cytoplasm. The enzyme catalyses Release of the N-terminal residue from a tripeptide.. In terms of biological role, cleaves the N-terminal amino acid of tripeptides. The chain is Peptidase T from Staphylococcus epidermidis (strain ATCC 12228 / FDA PCI 1200).